A 76-amino-acid polypeptide reads, in one-letter code: cAMP-dependent protein kinase inhibitor alpha (76 aa).

Threonine 2 is modified (N-acetylthreonine). The interval 49 to 76 is disordered; that stretch reads KTEGEDDGQRSSTEQSGEAQGEAAKSES.

The protein belongs to the PKI family. As to expression, present at high levels in skeletal muscle and brain but is present at lower levels in heart, testis and liver.

Its function is as follows. Extremely potent competitive inhibitor of cAMP-dependent protein kinase activity, this protein interacts with the catalytic subunit of the enzyme after the cAMP-induced dissociation of its regulatory chains. This is cAMP-dependent protein kinase inhibitor alpha (Pkia) from Mus musculus (Mouse).